A 161-amino-acid chain; its full sequence is Nucleotide-binding protein SAR11_0692 (161 aa).

The protein belongs to the YajQ family.

Its function is as follows. Nucleotide-binding protein. This chain is Nucleotide-binding protein SAR11_0692, found in Pelagibacter ubique (strain HTCC1062).